A 193-amino-acid polypeptide reads, in one-letter code: MVATGSLSGKNPASISELLDCGYRPESLLSDFDYWDYVVPEPNLNEVIFEESTCQNLVKMLENCLSKSKQTKLGCSKVLVPEKLTQRIAQDVLRLSSTEPCGLRGCVMHVNLEIENVCKKLDRIVCDSSVVPTFELTLVFKQENCSWSSFRDFFFSRGRFSSGFRRTLILSSGFRLVKKKLYSLIGATVIEGS.

This sequence belongs to the DDIT4 family.

Its subcellular location is the cytoplasm. Its function is as follows. Inhibits cell growth by regulating the TOR signaling pathway upstream of the TSC1-TSC2 complex and downstream of AKT1. This Pongo abelii (Sumatran orangutan) protein is DNA damage-inducible transcript 4-like protein (DDIT4L).